A 347-amino-acid polypeptide reads, in one-letter code: uncharacterized protein (347 aa).

It is found in the cytoplasm. It localises to the nucleus. This is an uncharacterized protein from Schizosaccharomyces pombe (strain 972 / ATCC 24843) (Fission yeast).